The sequence spans 161 residues: Protein YzcX (161 aa).

This is Protein YzcX (yzcX) from Escherichia coli (strain K12).